The sequence spans 485 residues: Glycogen synthase (485 aa).

Residue lysine 17 coordinates ADP-alpha-D-glucose.

This sequence belongs to the glycosyltransferase 1 family. Bacterial/plant glycogen synthase subfamily.

The enzyme catalyses [(1-&gt;4)-alpha-D-glucosyl](n) + ADP-alpha-D-glucose = [(1-&gt;4)-alpha-D-glucosyl](n+1) + ADP + H(+). The protein operates within glycan biosynthesis; glycogen biosynthesis. In terms of biological role, synthesizes alpha-1,4-glucan chains using ADP-glucose. The polypeptide is Glycogen synthase (Novosphingobium aromaticivorans (strain ATCC 700278 / DSM 12444 / CCUG 56034 / CIP 105152 / NBRC 16084 / F199)).